The sequence spans 317 residues: Methionyl-tRNA formyltransferase (317 aa).

112–115 (SLLP) contributes to the (6S)-5,6,7,8-tetrahydrofolate binding site.

It belongs to the Fmt family.

It catalyses the reaction L-methionyl-tRNA(fMet) + (6R)-10-formyltetrahydrofolate = N-formyl-L-methionyl-tRNA(fMet) + (6S)-5,6,7,8-tetrahydrofolate + H(+). Its function is as follows. Attaches a formyl group to the free amino group of methionyl-tRNA(fMet). The formyl group appears to play a dual role in the initiator identity of N-formylmethionyl-tRNA by promoting its recognition by IF2 and preventing the misappropriation of this tRNA by the elongation apparatus. This chain is Methionyl-tRNA formyltransferase, found in Mycobacterium avium (strain 104).